Here is a 393-residue protein sequence, read N- to C-terminus: Seven-bladed beta-propeller protein Rv1057 (393 aa).

Residues 208–230 are disordered; the sequence is DGGRIGSRSRSRQKSSKPRGNQA. Over residues 214 to 224 the composition is skewed to basic residues; the sequence is SRSRSRQKSSK.

Its function is as follows. May play an important role in host-pathogen interactions and in ESAT-6 secretion. The sequence is that of Seven-bladed beta-propeller protein Rv1057 from Mycobacterium tuberculosis (strain ATCC 25618 / H37Rv).